Here is a 313-residue protein sequence, read N- to C-terminus: Cobalamin biosynthesis protein CobD (313 aa).

5 consecutive transmembrane segments (helical) span residues 52-72, 79-99, 154-174, 204-224, and 289-309; these read VAGA…GAAL, CWPV…TSLA, VVPL…YRAI, YVGA…VGGS, and AVVL…MLVY.

Belongs to the CobD/CbiB family.

It is found in the cell membrane. It functions in the pathway cofactor biosynthesis; adenosylcobalamin biosynthesis. Functionally, converts cobyric acid to cobinamide by the addition of aminopropanol on the F carboxylic group. This chain is Cobalamin biosynthesis protein CobD, found in Mycobacterium bovis (strain ATCC BAA-935 / AF2122/97).